The primary structure comprises 668 residues: DNA ligase (668 aa).

NAD(+) is bound by residues 31 to 35 (DYDFD), 80 to 81 (SL), and Glu-111. Lys-113 functions as the N6-AMP-lysine intermediate in the catalytic mechanism. Arg-134, Glu-170, Lys-285, and Lys-309 together coordinate NAD(+). Zn(2+) is bound by residues Cys-403, Cys-406, Cys-421, and Cys-427. The region spanning 587-668 (NATEKFIGKT…EFITKLNESE (82 aa)) is the BRCT domain.

This sequence belongs to the NAD-dependent DNA ligase family. LigA subfamily. The cofactor is Mg(2+). Mn(2+) is required as a cofactor.

It carries out the reaction NAD(+) + (deoxyribonucleotide)n-3'-hydroxyl + 5'-phospho-(deoxyribonucleotide)m = (deoxyribonucleotide)n+m + AMP + beta-nicotinamide D-nucleotide.. DNA ligase that catalyzes the formation of phosphodiester linkages between 5'-phosphoryl and 3'-hydroxyl groups in double-stranded DNA using NAD as a coenzyme and as the energy source for the reaction. It is essential for DNA replication and repair of damaged DNA. The sequence is that of DNA ligase from Flavobacterium johnsoniae (strain ATCC 17061 / DSM 2064 / JCM 8514 / BCRC 14874 / CCUG 350202 / NBRC 14942 / NCIMB 11054 / UW101) (Cytophaga johnsonae).